Here is a 110-residue protein sequence, read N- to C-terminus: Large ribosomal subunit protein uL22 (110 aa).

It belongs to the universal ribosomal protein uL22 family. In terms of assembly, part of the 50S ribosomal subunit.

Functionally, this protein binds specifically to 23S rRNA; its binding is stimulated by other ribosomal proteins, e.g. L4, L17, and L20. It is important during the early stages of 50S assembly. It makes multiple contacts with different domains of the 23S rRNA in the assembled 50S subunit and ribosome. The globular domain of the protein is located near the polypeptide exit tunnel on the outside of the subunit, while an extended beta-hairpin is found that lines the wall of the exit tunnel in the center of the 70S ribosome. The protein is Large ribosomal subunit protein uL22 of Exiguobacterium sibiricum (strain DSM 17290 / CCUG 55495 / CIP 109462 / JCM 13490 / 255-15).